Here is a 126-residue protein sequence, read N- to C-terminus: Glycine cleavage system H protein (126 aa).

The Lipoyl-binding domain occupies 22–103 (KAYIGITDYA…PYGSWMALVE (82 aa)). K63 carries the post-translational modification N6-lipoyllysine.

It belongs to the GcvH family. In terms of assembly, the glycine cleavage system is composed of four proteins: P, T, L and H. (R)-lipoate is required as a cofactor.

Its function is as follows. The glycine cleavage system catalyzes the degradation of glycine. The H protein shuttles the methylamine group of glycine from the P protein to the T protein. This chain is Glycine cleavage system H protein, found in Thermoanaerobacter pseudethanolicus (strain ATCC 33223 / 39E) (Clostridium thermohydrosulfuricum).